The following is a 94-amino-acid chain: Small ribosomal subunit protein uS19 (94 aa).

Belongs to the universal ribosomal protein uS19 family.

Protein S19 forms a complex with S13 that binds strongly to the 16S ribosomal RNA. This Clostridium botulinum (strain Hall / ATCC 3502 / NCTC 13319 / Type A) protein is Small ribosomal subunit protein uS19.